The following is a 273-amino-acid chain: SPRY domain-containing SOCS box protein 1 (273 aa).

Position 31 is a phosphotyrosine (Tyr31). Residues 33–231 (KPTRLDLLLD…IRMRYLNGLD (199 aa)) enclose the B30.2/SPRY domain. The SOCS box domain maps to 232 to 273 (PEPLPLMDLCRRSVRLALGKGRLGEIHALPLPASLKAYLLYQ).

The protein belongs to the SPSB family. In terms of assembly, component of the probable ECS(SPSB1) E3 ubiquitin-protein ligase complex which contains CUL5, RNF7/RBX2, Elongin BC complex and SPSB1. Interacts with CUL5, RNF7, ELOB and ELOC. Directly interacts with MET tyrosine kinase domain in the presence and in the absence of HGF, however HGF treatment has a positive effect on this interaction. When phosphorylated, interacts with RASA1 without affecting its stability. Interacts (via B30.2/SPRY domain) with PAWR; this interaction is direct and occurs in association with the Elongin BC complex. Interacts with NOS2 and EPHB2.

It is found in the cytoplasm. It localises to the cytosol. It functions in the pathway protein modification; protein ubiquitination. Substrate recognition component of a SCF-like ECS (Elongin BC-CUL2/5-SOCS-box protein) E3 ubiquitin-protein ligase complex which mediates the ubiquitination and subsequent proteasomal degradation of target proteins. Negatively regulates nitric oxide (NO) production and limits cellular toxicity in activated macrophages by mediating the ubiquitination and proteasomal degradation of NOS2. Acts as a bridge which links NOS2 with the ECS E3 ubiquitin ligase complex components ELOC and CUL5. The protein is SPRY domain-containing SOCS box protein 1 (SPSB1) of Bos taurus (Bovine).